Consider the following 644-residue polypeptide: Translation factor guf1, mitochondrial (644 aa).

The transit peptide at 1–31 (MTLRRFSYTFQARILRGLQARPVFVLPSRSH) directs the protein to the mitochondrion. Residues 51-232 (VNIRNWAIIS…AIIQRVPHPI (182 aa)) form the tr-type G domain. GTP contacts are provided by residues 60 to 67 (SHIDHGKS), 125 to 129 (DTPGH), and 179 to 182 (NKID).

It belongs to the TRAFAC class translation factor GTPase superfamily. Classic translation factor GTPase family. LepA subfamily.

The protein localises to the mitochondrion inner membrane. It carries out the reaction GTP + H2O = GDP + phosphate + H(+). Promotes mitochondrial protein synthesis. May act as a fidelity factor of the translation reaction, by catalyzing a one-codon backward translocation of tRNAs on improperly translocated ribosomes. Binds to mitochondrial ribosomes in a GTP-dependent manner. This is Translation factor guf1, mitochondrial (guf1) from Schizosaccharomyces japonicus (strain yFS275 / FY16936) (Fission yeast).